A 400-amino-acid polypeptide reads, in one-letter code: Na(+)/H(+) antiporter NhaA (400 aa).

The next 12 membrane-spanning stretches (helical) occupy residues 26–46 (AGGI…NSPL), 71–91 (LIHW…GMEV), 107–127 (IFPA…YWFI), 137–157 (GWAI…ALLS), 166–186 (IFLL…IALF), 189–209 (HGLS…LILL), 212–232 (FKVS…ASVL), 233–253 (KSGV…PLKG), 273–293 (FVIL…GIDV), 299–319 (PLLL…IFGF), 340–360 (IFAV…LASL), and 373–393 (LSRL…YLFL).

The protein belongs to the NhaA Na(+)/H(+) (TC 2.A.33) antiporter family.

It localises to the cell inner membrane. It carries out the reaction Na(+)(in) + 2 H(+)(out) = Na(+)(out) + 2 H(+)(in). Functionally, na(+)/H(+) antiporter that extrudes sodium in exchange for external protons. The polypeptide is Na(+)/H(+) antiporter NhaA (Haemophilus influenzae (strain 86-028NP)).